Consider the following 34-residue polypeptide: Kappa-theraphotoxin-Sc1a (34 aa).

Disulfide bonds link C2-C16, C9-C21, and C15-C28. The residue at position 34 (I34) is an Isoleucine amide.

This sequence belongs to the neurotoxin 10 (Hwtx-1) family. 57 (ScTx1) subfamily. As to expression, expressed by the venom gland.

Its subcellular location is the secreted. Acts as a gating-modifier to inhibit voltage-gated potassium channels. It inhibits delayed Kv2.1/KCNB1 (IC(50) is 12.7 nM), Kv2.1/Kv9.3 (IC(50) is 7.2 nM) (KCNB1/KCNS3), Kv2.2/KCNB2 (IC(50) is 21.4 nM), and transient Kv4.2/KCND2 (IC(50) is 1.2 nM) channels. This chain is Kappa-theraphotoxin-Sc1a, found in Stromatopelma calceatum (Featherleg baboon tarantula).